The primary structure comprises 378 residues: 3,6-diketocamphane 1,6-monooxygenase (378 aa).

FMN-binding positions include His-10, Ser-44, Met-76, and 201–209; that span reads TGFSYNSPS.

The protein belongs to the bacterial luciferase oxidoreductase family. Homodimer. Likely forms a loose transient complex with a P.putida flavin reductase that provides the required FMNH(2) to the enzyme.

It catalyses the reaction (1S,4S)-bornane-2,5-dione + FMNH2 + O2 = (1S,4S)-5-oxo-1,2-campholide + FMN + H2O + H(+). In terms of biological role, involved in the degradation and assimilation of (-)-camphor, which allows P.putida strain NCIMB 10007 to grow on this enantiomer of camphor as the sole carbon source. Catalyzes the FMNH(2)-dependent lactonization of 3,6-diketocamphane via a Baeyer-Villiger oxidation to produce the unstable lactone 5-oxo-1,2-campholide with (S,S) configuration, that presumably undergoes spontaneous hydrolysis to form 2-oxo-Delta(3)-4,5,5-trimethylcyclopentenylacetate. Is also able to convert (-)-camphor to the corresponding lactone in vitro. Shows no conversion of (+)-camphor, (+)-fenchone, (-)-fenchone, and (+)-nopinone. Acts on other bicyclic ketones but very poorly on a few 2- and 4-substituted monocyclic ketones. The polypeptide is 3,6-diketocamphane 1,6-monooxygenase (Pseudomonas putida (Arthrobacter siderocapsulatus)).